Here is a 469-residue protein sequence, read N- to C-terminus: Adenosylhomocysteinase (469 aa).

3 residues coordinate substrate: Thr58, Asp133, and Glu195. Residue 196 to 198 (TTT) participates in NAD(+) binding. The substrate site is built by Lys225 and Asp229. NAD(+)-binding positions include Asn230, 259–264 (GFGDVG), Glu282, Asn317, 338–340 (IGH), and Asn383.

Belongs to the adenosylhomocysteinase family. It depends on NAD(+) as a cofactor.

Its subcellular location is the cytoplasm. The catalysed reaction is S-adenosyl-L-homocysteine + H2O = L-homocysteine + adenosine. It functions in the pathway amino-acid biosynthesis; L-homocysteine biosynthesis; L-homocysteine from S-adenosyl-L-homocysteine: step 1/1. Functionally, may play a key role in the regulation of the intracellular concentration of adenosylhomocysteine. The protein is Adenosylhomocysteinase of Rhodopseudomonas palustris (strain TIE-1).